Reading from the N-terminus, the 185-residue chain is Ribosome-recycling factor (185 aa).

Belongs to the RRF family.

The protein localises to the cytoplasm. Its function is as follows. Responsible for the release of ribosomes from messenger RNA at the termination of protein biosynthesis. May increase the efficiency of translation by recycling ribosomes from one round of translation to another. This Corynebacterium glutamicum (strain ATCC 13032 / DSM 20300 / JCM 1318 / BCRC 11384 / CCUG 27702 / LMG 3730 / NBRC 12168 / NCIMB 10025 / NRRL B-2784 / 534) protein is Ribosome-recycling factor.